The sequence spans 335 residues: Tetraacyldisaccharide 4'-kinase (335 aa).

Position 58–65 (58–65 (VVGGSGKT)) interacts with ATP.

This sequence belongs to the LpxK family.

The enzyme catalyses a lipid A disaccharide + ATP = a lipid IVA + ADP + H(+). The protein operates within glycolipid biosynthesis; lipid IV(A) biosynthesis; lipid IV(A) from (3R)-3-hydroxytetradecanoyl-[acyl-carrier-protein] and UDP-N-acetyl-alpha-D-glucosamine: step 6/6. Functionally, transfers the gamma-phosphate of ATP to the 4'-position of a tetraacyldisaccharide 1-phosphate intermediate (termed DS-1-P) to form tetraacyldisaccharide 1,4'-bis-phosphate (lipid IVA). The protein is Tetraacyldisaccharide 4'-kinase of Hydrogenovibrio crunogenus (strain DSM 25203 / XCL-2) (Thiomicrospira crunogena).